The sequence spans 216 residues: Adenylate kinase (216 aa).

10 to 15 (GSGKGT) contributes to the ATP binding site. The interval 30 to 59 (STGDMLRAAVKEGTPMGVKAKAKMDAGALV) is NMP. AMP contacts are provided by residues Thr31, Arg36, 57-59 (ALV), 85-88 (GFPR), and Gln92. Residues 126-163 (GRRTCRDCGKMYHVEFDAPAVADKCDKCGGQLFQRDDD) are LID. Arg127 lines the ATP pocket. Positions 130, 133, 150, and 153 each coordinate Zn(2+). Residues Arg160 and Arg171 each contribute to the AMP site. ATP is bound at residue Lys199.

The protein belongs to the adenylate kinase family. As to quaternary structure, monomer.

The protein localises to the cytoplasm. It carries out the reaction AMP + ATP = 2 ADP. It participates in purine metabolism; AMP biosynthesis via salvage pathway; AMP from ADP: step 1/1. Catalyzes the reversible transfer of the terminal phosphate group between ATP and AMP. Plays an important role in cellular energy homeostasis and in adenine nucleotide metabolism. In Syntrophotalea carbinolica (strain DSM 2380 / NBRC 103641 / GraBd1) (Pelobacter carbinolicus), this protein is Adenylate kinase.